The following is a 240-amino-acid chain: uncharacterized protein (240 aa).

A helical transmembrane segment spans residues 73-93 (LLGCLYFFIYFVAPTLGPVLF).

This sequence belongs to the universal ribosomal protein uS3 family.

The protein resides in the mitochondrion membrane. This is an uncharacterized protein from Arabidopsis thaliana (Mouse-ear cress).